Here is a 92-residue protein sequence, read N- to C-terminus: Small ribosomal subunit protein bS18 (92 aa).

A disordered region spans residues 1 to 22; sequence MADERAPQRSTSGPRKKRPFQR.

It belongs to the bacterial ribosomal protein bS18 family. In terms of assembly, part of the 30S ribosomal subunit. Forms a tight heterodimer with protein bS6.

Functionally, binds as a heterodimer with protein bS6 to the central domain of the 16S rRNA, where it helps stabilize the platform of the 30S subunit. This chain is Small ribosomal subunit protein bS18, found in Citrifermentans bemidjiense (strain ATCC BAA-1014 / DSM 16622 / JCM 12645 / Bem) (Geobacter bemidjiensis).